We begin with the raw amino-acid sequence, 362 residues long: MRVDAFDFDLPEEHIALRPAEPRDAARMLVVRPGGAPELSDLKVRDLPDFITANDALVVNDTRVIPAALEGVRERDGGSAVRIEANLIKRLDASRWQAFAKPGKRLRVGDRVRFGGEGSACLLGALDAQIAAKEDDGSVILAFDLAGTALDEAVTAVGHMPIPPYIAARRAEDDRDRADYQTLFARVSGSVAAPTASLHFTPELMARIAATGASMHTVTLHVGAGTFLPVKAEDTTGHRMHAEWGEVSADTAAALNAVKAKGGRIFTVGSTSTRLIESATGEDGTIRPFVGETDIFITPGYRFRAVDGMLTNFHLPRSTLVMLVAAFVGHEAQKRAYAHAIAAGYRFYSYGDACLLLPEGGP.

It belongs to the QueA family. In terms of assembly, monomer.

It is found in the cytoplasm. The enzyme catalyses 7-aminomethyl-7-carbaguanosine(34) in tRNA + S-adenosyl-L-methionine = epoxyqueuosine(34) in tRNA + adenine + L-methionine + 2 H(+). It functions in the pathway tRNA modification; tRNA-queuosine biosynthesis. Its function is as follows. Transfers and isomerizes the ribose moiety from AdoMet to the 7-aminomethyl group of 7-deazaguanine (preQ1-tRNA) to give epoxyqueuosine (oQ-tRNA). The chain is S-adenosylmethionine:tRNA ribosyltransferase-isomerase from Xanthobacter autotrophicus (strain ATCC BAA-1158 / Py2).